The sequence spans 294 residues: Acetylglutamate kinase (294 aa).

Substrate is bound by residues 67–68 (GG), Arg89, and Asn193.

Belongs to the acetylglutamate kinase family. ArgB subfamily.

The protein resides in the cytoplasm. The enzyme catalyses N-acetyl-L-glutamate + ATP = N-acetyl-L-glutamyl 5-phosphate + ADP. Its pathway is amino-acid biosynthesis; L-arginine biosynthesis; N(2)-acetyl-L-ornithine from L-glutamate: step 2/4. Its function is as follows. Catalyzes the ATP-dependent phosphorylation of N-acetyl-L-glutamate. In Leptospira interrogans serogroup Icterohaemorrhagiae serovar copenhageni (strain Fiocruz L1-130), this protein is Acetylglutamate kinase.